A 186-amino-acid chain; its full sequence is GTP cyclohydrolase 1 1 (186 aa).

It belongs to the GTP cyclohydrolase I family. In terms of assembly, homomer.

The enzyme catalyses GTP + H2O = 7,8-dihydroneopterin 3'-triphosphate + formate + H(+). It functions in the pathway cofactor biosynthesis; 7,8-dihydroneopterin triphosphate biosynthesis; 7,8-dihydroneopterin triphosphate from GTP: step 1/1. This chain is GTP cyclohydrolase 1 1 (folE1), found in Pseudomonas aeruginosa (strain ATCC 15692 / DSM 22644 / CIP 104116 / JCM 14847 / LMG 12228 / 1C / PRS 101 / PAO1).